A 156-amino-acid polypeptide reads, in one-letter code: MAQKALEQTTVKEEKLELPTTIRGLAQLLDIPLVDCLLPCNFCGRFLDYLEVCEFDYKKLTLIWKDYSVYACCRLCCSATATYEFNVFYQQTVLGRDIELATGLSIFEIDIRCHTCLSFLDIIEKLDSCGRGLPFHKVRNAWKGVCRQCKHFYNDW.

2 zinc fingers span residues 40–76 (CNFC…CRLC) and 113–149 (CHTC…CRQC).

It belongs to the papillomaviridae E6 protein family. In terms of assembly, forms homodimers. Interacts with ubiquitin-protein ligase UBE3A/E6-AP; this interaction stimulates UBE3A ubiquitin activity. Interacts with host BAK1.

It localises to the host cytoplasm. It is found in the host nucleus. In terms of biological role, plays a major role in the induction and maintenance of cellular transformation. E6 associates with host UBE3A/E6-AP ubiquitin-protein ligase and modulates its activity. Protects host keratinocytes from apoptosis by mediating the degradation of host BAK1. May also inhibit host immune response. This is Protein E6 from Homo sapiens (Human).